The primary structure comprises 226 residues: Leucyl/phenylalanyl-tRNA--protein transferase (226 aa).

It belongs to the L/F-transferase family.

It localises to the cytoplasm. It catalyses the reaction N-terminal L-lysyl-[protein] + L-leucyl-tRNA(Leu) = N-terminal L-leucyl-L-lysyl-[protein] + tRNA(Leu) + H(+). It carries out the reaction N-terminal L-arginyl-[protein] + L-leucyl-tRNA(Leu) = N-terminal L-leucyl-L-arginyl-[protein] + tRNA(Leu) + H(+). The enzyme catalyses L-phenylalanyl-tRNA(Phe) + an N-terminal L-alpha-aminoacyl-[protein] = an N-terminal L-phenylalanyl-L-alpha-aminoacyl-[protein] + tRNA(Phe). Functions in the N-end rule pathway of protein degradation where it conjugates Leu, Phe and, less efficiently, Met from aminoacyl-tRNAs to the N-termini of proteins containing an N-terminal arginine or lysine. This is Leucyl/phenylalanyl-tRNA--protein transferase from Pseudomonas fluorescens (strain ATCC BAA-477 / NRRL B-23932 / Pf-5).